The following is a 517-amino-acid chain: MNKTIILLLISIIFEIVISSSVDGNYPAGGLYFGVSSNFLVGESEKFTQYVQDELLAMDLPDQSGDSDGVQYSFTHFKLALNLQDFFYAQLGPGVFQMGWDTITFNLQWEYEICVKKVVKLCESGTITVYTASGQSVSLGTTLDVLFNSSNAKIEATSTVMPFEAGAVVASVHCTDSVCLIPINDIVSEVSSQFVSQVTNGVTKAINDKAPSIEQLFTPIKQIPITMDSGNQYWIDLEGCLVEANYSSNSPSTITAAINGGIVLENTDGNFVYPTQTPSYVPYDSQMESFTSDYCITITGYFIETLLDAVLVPEFPMTIQPSQIPASSPVQLNTSSDFFSGIAPNLTSKYPNVGIQVNLMPPTIPTVTINSSAIILTDFEISTSFLVLTDNDDAIPVFNVLFKFDAEIQTTLYTDSVSVFSLNSTLLSITPNVTITDSNVGSVDATGFVQLIEMAQSIIKIPSITYPVPSKYSITNVNSQLGDQIIQLTFDLIENSTNQKYLKKSVNLNLKKKKKKK.

Residues 1-19 (MNKTIILLLISIIFEIVIS) form the signal peptide. Asparagine 148, asparagine 245, asparagine 333, asparagine 345, asparagine 370, asparagine 423, asparagine 432, and asparagine 495 each carry an N-linked (GlcNAc...) asparagine glycan.

Belongs to the UPF0522 family.

Its subcellular location is the secreted. The polypeptide is UPF0522 protein B (Dictyostelium discoideum (Social amoeba)).